A 155-amino-acid polypeptide reads, in one-letter code: Transcription antitermination protein NusB (155 aa).

Belongs to the NusB family.

Its function is as follows. Involved in transcription antitermination. Required for transcription of ribosomal RNA (rRNA) genes. Binds specifically to the boxA antiterminator sequence of the ribosomal RNA (rrn) operons. The sequence is that of Transcription antitermination protein NusB from Ralstonia pickettii (strain 12J).